The primary structure comprises 612 residues: Dihydroxy-acid dehydratase (612 aa).

Asp-81 serves as a coordination point for Mg(2+). A [2Fe-2S] cluster-binding site is contributed by Cys-122. Residues Asp-123 and Lys-124 each coordinate Mg(2+). Position 124 is an N6-carboxylysine (Lys-124). Residue Cys-193 coordinates [2Fe-2S] cluster. Glu-489 is a binding site for Mg(2+). Ser-515 (proton acceptor) is an active-site residue.

Belongs to the IlvD/Edd family. As to quaternary structure, homodimer. [2Fe-2S] cluster serves as cofactor. Requires Mg(2+) as cofactor.

The enzyme catalyses (2R)-2,3-dihydroxy-3-methylbutanoate = 3-methyl-2-oxobutanoate + H2O. It catalyses the reaction (2R,3R)-2,3-dihydroxy-3-methylpentanoate = (S)-3-methyl-2-oxopentanoate + H2O. It functions in the pathway amino-acid biosynthesis; L-isoleucine biosynthesis; L-isoleucine from 2-oxobutanoate: step 3/4. Its pathway is amino-acid biosynthesis; L-valine biosynthesis; L-valine from pyruvate: step 3/4. Its function is as follows. Functions in the biosynthesis of branched-chain amino acids. Catalyzes the dehydration of (2R,3R)-2,3-dihydroxy-3-methylpentanoate (2,3-dihydroxy-3-methylvalerate) into 2-oxo-3-methylpentanoate (2-oxo-3-methylvalerate) and of (2R)-2,3-dihydroxy-3-methylbutanoate (2,3-dihydroxyisovalerate) into 2-oxo-3-methylbutanoate (2-oxoisovalerate), the penultimate precursor to L-isoleucine and L-valine, respectively. The polypeptide is Dihydroxy-acid dehydratase (Xanthomonas euvesicatoria pv. vesicatoria (strain 85-10) (Xanthomonas campestris pv. vesicatoria)).